Consider the following 309-residue polypeptide: Glutaminase (309 aa).

Residues Ser-65, Asn-117, Glu-162, Asn-169, Tyr-193, Tyr-245, and Val-263 each contribute to the substrate site.

This sequence belongs to the glutaminase family. In terms of assembly, homotetramer.

The catalysed reaction is L-glutamine + H2O = L-glutamate + NH4(+). This is Glutaminase from Shouchella clausii (strain KSM-K16) (Alkalihalobacillus clausii).